We begin with the raw amino-acid sequence, 549 residues long: Glucose-6-phosphate isomerase (549 aa).

An N6-acetyllysine mark is found at Lys-80, Lys-228, and Lys-234. Glu-355 functions as the Proton donor in the catalytic mechanism. Active-site residues include His-386 and Lys-514.

It belongs to the GPI family.

It is found in the cytoplasm. The catalysed reaction is alpha-D-glucose 6-phosphate = beta-D-fructose 6-phosphate. It participates in carbohydrate biosynthesis; gluconeogenesis. Its pathway is carbohydrate degradation; glycolysis; D-glyceraldehyde 3-phosphate and glycerone phosphate from D-glucose: step 2/4. In terms of biological role, catalyzes the reversible isomerization of glucose-6-phosphate to fructose-6-phosphate. The polypeptide is Glucose-6-phosphate isomerase (Shigella flexneri serotype 5b (strain 8401)).